Consider the following 605-residue polypeptide: Condensin-2 complex subunit H2 (605 aa).

T19 bears the Phosphothreonine mark. S95, S200, S208, S228, and S232 each carry phosphoserine. Positions 194–331 are disordered; sequence LEPEGMSPME…PFDSLESKPF (138 aa). Residues 256–266 show a composition bias toward acidic residues; it reads GEDEDAEEAVE. Residues S282, S284, S466, and S492 each carry the phosphoserine modification.

It belongs to the CND2 H2 (condensin-2 subunit 2) family. As to quaternary structure, component of the condensin-2 complex, which contains the SMC2 and SMC4 heterodimer, and three non SMC subunits, NCAPG2, NCAPH2 and NCAPD3 that probably regulate the complex.

It is found in the nucleus. Its subcellular location is the chromosome. Regulatory subunit of the condensin-2 complex, a complex that seems to provide chromosomes with an additional level of organization and rigidity and in establishing mitotic chromosome architecture. May promote the resolution of double-strand DNA catenanes (intertwines) between sister chromatids. Condensin-mediated compaction likely increases tension in catenated sister chromatids, providing directionality for type II topoisomerase-mediated strand exchanges toward chromatid decatenation. Required for decatenation of chromatin bridges at anaphase. Early in neurogenesis, may play an essential role to ensure accurate mitotic chromosome condensation in neuron stem cells, ultimately affecting neuron pool and cortex size. Seems to have lineage-specific role in T-cell development. This Homo sapiens (Human) protein is Condensin-2 complex subunit H2 (NCAPH2).